The primary structure comprises 389 residues: Succinate--CoA ligase [ADP-forming] subunit beta (389 aa).

Residues 9-236 form the ATP-grasp domain; the sequence is KELFAKHEVP…KDATDPLELK (228 aa). ATP contacts are provided by residues K45, 52 to 54, S94, and E99; that span reads GRG. Mg(2+) is bound by residues N191 and D205. Substrate is bound by residues N256 and 318-320; that span reads GIT.

It belongs to the succinate/malate CoA ligase beta subunit family. Heterotetramer of two alpha and two beta subunits. Mg(2+) serves as cofactor.

The enzyme catalyses succinate + ATP + CoA = succinyl-CoA + ADP + phosphate. The catalysed reaction is GTP + succinate + CoA = succinyl-CoA + GDP + phosphate. It participates in carbohydrate metabolism; tricarboxylic acid cycle; succinate from succinyl-CoA (ligase route): step 1/1. In terms of biological role, succinyl-CoA synthetase functions in the citric acid cycle (TCA), coupling the hydrolysis of succinyl-CoA to the synthesis of either ATP or GTP and thus represents the only step of substrate-level phosphorylation in the TCA. The beta subunit provides nucleotide specificity of the enzyme and binds the substrate succinate, while the binding sites for coenzyme A and phosphate are found in the alpha subunit. This chain is Succinate--CoA ligase [ADP-forming] subunit beta, found in Rhodococcus opacus (strain B4).